A 257-amino-acid polypeptide reads, in one-letter code: Imidazole glycerol phosphate synthase subunit HisF (257 aa).

Catalysis depends on residues Asp-12 and Asp-131.

It belongs to the HisA/HisF family. As to quaternary structure, heterodimer of HisH and HisF.

Its subcellular location is the cytoplasm. The enzyme catalyses 5-[(5-phospho-1-deoxy-D-ribulos-1-ylimino)methylamino]-1-(5-phospho-beta-D-ribosyl)imidazole-4-carboxamide + L-glutamine = D-erythro-1-(imidazol-4-yl)glycerol 3-phosphate + 5-amino-1-(5-phospho-beta-D-ribosyl)imidazole-4-carboxamide + L-glutamate + H(+). Its pathway is amino-acid biosynthesis; L-histidine biosynthesis; L-histidine from 5-phospho-alpha-D-ribose 1-diphosphate: step 5/9. Functionally, IGPS catalyzes the conversion of PRFAR and glutamine to IGP, AICAR and glutamate. The HisF subunit catalyzes the cyclization activity that produces IGP and AICAR from PRFAR using the ammonia provided by the HisH subunit. In Marinomonas sp. (strain MWYL1), this protein is Imidazole glycerol phosphate synthase subunit HisF.